Reading from the N-terminus, the 115-residue chain is Splicing factor 3B subunit 6-like protein (115 aa).

Residues 9-22 (EVNSILFIKNLSFK) are interaction with pre-mRNA branch site. The RRM domain maps to 12 to 87 (SILFIKNLSF…RYLVVHYYNP (76 aa)).

Its subcellular location is the nucleus. Its function is as follows. Necessary for the splicing of pre-mRNA. The protein is Splicing factor 3B subunit 6-like protein of Schizosaccharomyces pombe (strain 972 / ATCC 24843) (Fission yeast).